The following is a 489-amino-acid chain: N-succinylglutamate 5-semialdehyde dehydrogenase (489 aa).

Residue glycine 216–glycine 221 participates in NAD(+) binding. Residues glutamate 239 and cysteine 273 contribute to the active site.

The protein belongs to the aldehyde dehydrogenase family. AstD subfamily.

The enzyme catalyses N-succinyl-L-glutamate 5-semialdehyde + NAD(+) + H2O = N-succinyl-L-glutamate + NADH + 2 H(+). Its pathway is amino-acid degradation; L-arginine degradation via AST pathway; L-glutamate and succinate from L-arginine: step 4/5. Functionally, catalyzes the NAD-dependent reduction of succinylglutamate semialdehyde into succinylglutamate. In Erwinia tasmaniensis (strain DSM 17950 / CFBP 7177 / CIP 109463 / NCPPB 4357 / Et1/99), this protein is N-succinylglutamate 5-semialdehyde dehydrogenase.